Consider the following 442-residue polypeptide: tRNA(Ile)-lysidine synthase (442 aa).

28–33 (SGGLDS) contributes to the ATP binding site.

Belongs to the tRNA(Ile)-lysidine synthase family.

The protein resides in the cytoplasm. The enzyme catalyses cytidine(34) in tRNA(Ile2) + L-lysine + ATP = lysidine(34) in tRNA(Ile2) + AMP + diphosphate + H(+). Ligates lysine onto the cytidine present at position 34 of the AUA codon-specific tRNA(Ile) that contains the anticodon CAU, in an ATP-dependent manner. Cytidine is converted to lysidine, thus changing the amino acid specificity of the tRNA from methionine to isoleucine. This is tRNA(Ile)-lysidine synthase from Pseudomonas aeruginosa (strain ATCC 15692 / DSM 22644 / CIP 104116 / JCM 14847 / LMG 12228 / 1C / PRS 101 / PAO1).